Here is a 118-residue protein sequence, read N- to C-terminus: MSGKNLIIQGIEEAQLKSELPEFSAGDTVTVQVKVKEGTRERLQAFQGVVIARRNRGLNSAFTVRKISHGVGVERVFQLHSPLIDSIEVNRRGDVSRAKLYYLRDRSGKSARIKEKIR.

Belongs to the bacterial ribosomal protein bL19 family.

Its function is as follows. This protein is located at the 30S-50S ribosomal subunit interface and may play a role in the structure and function of the aminoacyl-tRNA binding site. The sequence is that of Large ribosomal subunit protein bL19 from Alcanivorax borkumensis (strain ATCC 700651 / DSM 11573 / NCIMB 13689 / SK2).